A 710-amino-acid polypeptide reads, in one-letter code: Prolyl endopeptidase (710 aa).

Met-1 is modified (N-acetylmethionine). Lys-157 carries the post-translational modification N6-acetyllysine. Residues Ser-554, Asp-641, and His-680 each act as charge relay system in the active site.

Belongs to the peptidase S9A family. As to quaternary structure, monomer. The N-terminus is blocked.

The protein resides in the cytoplasm. The catalysed reaction is Hydrolysis of Pro-|-Xaa &gt;&gt; Ala-|-Xaa in oligopeptides.. Functionally, cleaves peptide bonds on the C-terminal side of prolyl residues within peptides that are up to approximately 30 amino acids long. In Homo sapiens (Human), this protein is Prolyl endopeptidase (PREP).